We begin with the raw amino-acid sequence, 313 residues long: NADH-ubiquinone oxidoreductase chain 1 (313 aa).

A run of 8 helical transmembrane segments spans residues 7 to 27 (LIGSLLLVICVMVGVAFLTLL), 73 to 93 (IFYYFSPIFSLFLSLLIWMSM), 104 to 124 (LGVLFFLCITSLGVYTVMVAG), 150 to 170 (LALILLSFIFLIGNYNFLNFF), 175 to 195 (YMWFIVFCFPLGLVWFASCLA), 226 to 246 (LIFLAEYSSILFMSMLFSVIF), 250 to 270 (DIYSILFFFKLTIISFFFIWV), and 293 to 313 (MSLNYLFFFIGVKIFILSMLF).

Belongs to the complex I subunit 1 family.

It is found in the mitochondrion inner membrane. It catalyses the reaction a ubiquinone + NADH + 5 H(+)(in) = a ubiquinol + NAD(+) + 4 H(+)(out). Core subunit of the mitochondrial membrane respiratory chain NADH dehydrogenase (Complex I) that is believed to belong to the minimal assembly required for catalysis. Complex I functions in the transfer of electrons from NADH to the respiratory chain. The immediate electron acceptor for the enzyme is believed to be ubiquinone. The chain is NADH-ubiquinone oxidoreductase chain 1 from Aedes aegypti (Yellowfever mosquito).